The sequence spans 489 residues: Cytochrome P450 monooxygenase prhB (489 aa).

Helical transmembrane passes span 1–21, 212–232, and 287–307; these read MFSFGFLITAVVFWVVTKVIY, VIFQCLGFFPWIKEPLVMIFA, and LFIGAGAESTATLLMGVAYLL. 2 N-linked (GlcNAc...) asparagine glycosylation sites follow: asparagine 347 and asparagine 379. Heme is bound at residue cysteine 431.

The protein belongs to the cytochrome P450 family. The cofactor is heme.

Its subcellular location is the membrane. Its pathway is secondary metabolite biosynthesis; terpenoid biosynthesis. Functionally, cytochrome P450 monooxygenase; part of the gene cluster that mediates the biosynthesis of paraherquonin, a meroterpenoid with a unique, highly congested hexacyclic molecular architecture. The first step of the pathway is the synthesis of 3,5-dimethylorsellinic acid (DMOA) by the polyketide synthase prhL. Synthesis of DMOA is followed by farnesylation by the prenyltransferase prhE, methylesterification by the methyl-transferase prhM, epoxidation of the prenyl chain by the flavin-dependent monooxygenase prhF, and cyclization of the farnesyl moiety by the terpene cyclase prhH, to yield the tetracyclic intermediate, protoaustinoid A. The short chain dehydrogenase prhI then oxidizes the C-3 alcohol group of the terpene cyclase product to transform protoaustinoid A into protoaustinoid B. The FAD-binding monooxygenase prhJ catalyzes the oxidation of protoaustinoid B into preaustinoid A which is further oxidized into preaustinoid A1 by FAD-binding monooxygenase phrK. Finally, prhA leads to berkeleydione via the berkeleyone B intermediate. PrhA is a multifunctional dioxygenase that first desaturates at C5-C6 to form berkeleyone B, followed by rearrangement of the A/B-ring to form the cycloheptadiene moiety in berkeleydione. Berkeleydione serves as the key intermediate for the biosynthesis of paraherquonin as well as many other meroterpenoids. The cytochrome P450 monooxygenases prhB, prhD, and prhN, as well as the isomerase prhC, are probably involved in the late stage of paraherquonin biosynthesis, after the production of berkeleydione. Especially prhC might be a multifunctional enzyme that catalyzes the D-ring expansion via intramolecular methoxy rearrangement, as well as the hydrolysis of the expanded D-ring. The protein is Cytochrome P450 monooxygenase prhB of Penicillium brasilianum.